A 4678-amino-acid polypeptide reads, in one-letter code: E3 ubiquitin-protein ligase MYCBP2 (4678 aa).

Disordered regions lie at residues 87 to 127 (DRDQ…RSKS), 172 to 192 (SKNS…SKEP), and 609 to 628 (ASKG…KPYK). Basic residues predominate over residues 100-124 (SRNKKILNKKKLKRKQKSKSKVKTR). Serine 127, serine 178, serine 181, and serine 183 each carry phosphoserine. RCC1 repeat units follow at residues 600–655 (DGSI…VISK), 699–755 (NGEV…MMCP), 907–957 (KRDK…VLME), 958–1008 (NGDV…VLLM), and 1010–1066 (GQVF…LRID). Positions 898–910 (RSHPAQLKHKRDK) are enriched in basic residues. Residues 898 to 928 (RSHPAQLKHKRDKHKDGSGERGEKDASKITT) are disordered. Residues 911-924 (HKDGSGERGEKDAS) are compositionally biased toward basic and acidic residues. Positions 1235–1386 (NRFESHGGGW…GQIPQLLYRL (152 aa)) are PHR domain 1. Serine 1624 is subject to Phosphoserine. A PHR domain 2 region spans residues 1726–1884 (NRFTKTSQGR…GQIPQILYYR (159 aa)). An intrachain disulfide couples cysteine 1748 to cysteine 1863. Disordered stretches follow at residues 1993–2012 (FNPN…QGLS) and 2321–2340 (QQDQ…VTAA). Positions 1994–2012 (NPNQSTDSTTGNQPEQGLS) are enriched in polar residues. Positions 2022–2550 (VIESEHPYKP…NQHLGKSLLV (529 aa)) are RAE1 binding. The Filamin repeat unit spans residues 2341-2443 (SSNTDMTYGG…IDAGLEVKVK (103 aa)). Threonine 2683 bears the Phosphothreonine mark. 4 disordered regions span residues 2709 to 2931 (LGNS…LHSE), 2943 to 2963 (TNSL…VDEG), 2979 to 3020 (EQEM…EPAK), and 3066 to 3085 (APIR…ETKL). The segment covering 2718–2733 (NISTSSKPASTSGKSE) has biased composition (polar residues). A compositionally biased stretch (basic and acidic residues) spans 2742-2760 (LKPDGRMSRTTADQKKPRG). A Phosphoserine modification is found at serine 2769. A compositionally biased stretch (basic and acidic residues) spans 2775–2785 (DAAKLRSDSHS). Residues 2786–2810 (RSLSPNHNTLQTLKSDGRMPSSSRA) show a composition bias toward polar residues. Serine 2787, serine 2789, serine 2833, serine 2839, serine 2869, serine 2871, and serine 2920 each carry phosphoserine. Low complexity predominate over residues 2828–2843 (PANRSSPSGASSPRSS). Positions 2860–2871 (TKLDPPRERSKS) are enriched in basic and acidic residues. Serine 2985 is modified (phosphoserine). A compositionally biased stretch (basic residues) spans 2988–3001 (ISRKCANRHTRPKK). Phosphoserine occurs at positions 3090, 3478, and 3505. Residues 3605 to 3631 (PVEPEEEEDEENKTSKENSEQEKDTRV) are disordered. The span at 3616–3631 (NKTSKENSEQEKDTRV) shows a compositional bias: basic and acidic residues. Positions 3719-3897 (SISIQSGFEA…VAQQRNCEAE (179 aa)) constitute a DOC domain. The tract at residues 3915-3934 (SGDAEPTPEQEEKALLSSPE) is disordered. Position 3921 is a phosphothreonine (threonine 3921). Phosphoserine occurs at positions 3931 and 3932. 10 residues coordinate Zn(2+): cysteine 4428, cysteine 4431, cysteine 4446, histidine 4448, histidine 4451, cysteine 4454, cysteine 4475, cysteine 4478, cysteine 4544, and cysteine 4547. Residues 4428-4479 (CMICFTEALSAAPAIQLDCSHIFHLQCCRRVLENRWLGPRITFGFISCPICK) form an RING-type; atypical zinc finger. The tandem cysteine domain stretch occupies residues 4539–4676 (YAYYVCYKCR…LGCGVCRNAH (138 aa)). Cysteine 4558 is an active-site residue. Residues cysteine 4575, cysteine 4578, cysteine 4587, histidine 4590, cysteine 4599, cysteine 4602, and cysteine 4603 each contribute to the Zn(2+) site. Cysteine 4610 is an active-site residue. The Zn(2+) site is built by cysteine 4617, cysteine 4620, cysteine 4638, cysteine 4652, histidine 4658, cysteine 4669, and cysteine 4672.

This sequence belongs to the RING-Cys relay (RCR) family. As to quaternary structure, interacts with MYC. Interacts with TSC2 (tuberin) when TSC2 is in complex with TSC1 (hamartin). Interacts with FBXO45. Interacts with RAE1. Interacts with CPNE1 (via VWFA domain) and CPNE4 (via VWFA domain). Interacts with (sumoylated) RANGAP1; interaction with sumoylated RANGAP1 inhibits E3 ubiquitin-protein ligase activity and promotes MYCBP2 translocation to the nucleus. Interacts with RAN. Interacts with ATP13A2; the interaction inhibits the ubiquitination of TSC2 by MYCBP2. Interacts with USP11. Autoubiquitinated. As to expression, expressed in all tissues examined, expression is exceptionally abundant in brain and thymus. Colocalizes with TSC1 and TSC2 along the neurites and in the growth cones. Highly expressed in peripheral and central neurons. Colocalized with TSC1 in one of the filopodial extensions at the tip of a growth cone.

Its subcellular location is the nucleus. The protein resides in the cell projection. The protein localises to the axon. It localises to the cytoplasm. It is found in the cytoskeleton. The catalysed reaction is [E2 ubiquitin-conjugating enzyme]-S-ubiquitinyl-L-cysteine + [acceptor protein]-L-threonine = [E2 ubiquitin-conjugating enzyme]-L-cysteine + [acceptor protein]-3-O-ubiquitinyl-L-threonine.. It participates in protein modification; protein ubiquitination. Its function is as follows. Atypical E3 ubiquitin-protein ligase which specifically mediates ubiquitination of threonine and serine residues on target proteins, instead of ubiquitinating lysine residues. Shows esterification activity towards both threonine and serine, with a preference for threonine, and acts via two essential catalytic cysteine residues that relay ubiquitin to its substrate via thioester intermediates. Interacts with the E2 enzymes UBE2D1, UBE2D3, UBE2E1 and UBE2L3. Plays a key role in neural development, probably by mediating ubiquitination of threonine residues on target proteins. Involved in different processes such as regulation of neurite outgrowth, synaptic growth, synaptogenesis and axon degeneration. Required for the formation of major central nervous system axon tracts. Required for proper axon growth by regulating axon navigation and axon branching: acts by regulating the subcellular location and stability of MAP3K12/DLK. Required for proper localization of retinogeniculate projections but not for eye-specific segregation. Regulates axon guidance in the olfactory system. Involved in Wallerian axon degeneration, an evolutionarily conserved process that drives the loss of damaged axons: acts by promoting destabilization of NMNAT2, probably via ubiquitination of NMNAT2. Catalyzes ubiquitination of threonine and/or serine residues on NMNAT2, consequences of threonine and/or serine ubiquitination are however unknown. Regulates the internalization of TRPV1 in peripheral sensory neurons. Mediates ubiquitination and subsequent proteasomal degradation of TSC2/tuberin. Independently of the E3 ubiquitin-protein ligase activity, also acts as a guanosine exchange factor (GEF) for RAN in neurons of dorsal root ganglia. May function as a facilitator or regulator of transcriptional activation by MYC. Acts in concert with HUWE1 to regulate the circadian clock gene expression by promoting the lithium-induced ubiquination and degradation of NR1D1. The chain is E3 ubiquitin-protein ligase MYCBP2 from Homo sapiens (Human).